Here is a 183-residue protein sequence, read N- to C-terminus: Large ribosomal subunit protein uL10 (183 aa).

Belongs to the universal ribosomal protein uL10 family. In terms of assembly, part of the ribosomal stalk of the 50S ribosomal subunit. The N-terminus interacts with L11 and the large rRNA to form the base of the stalk. The C-terminus forms an elongated spine to which L12 dimers bind in a sequential fashion forming a multimeric L10(L12)X complex.

Functionally, forms part of the ribosomal stalk, playing a central role in the interaction of the ribosome with GTP-bound translation factors. This Mesomycoplasma hyopneumoniae (strain 7448) (Mycoplasma hyopneumoniae) protein is Large ribosomal subunit protein uL10.